The following is a 231-amino-acid chain: UPF0758 protein RBAM_025090 (231 aa).

Residues Val109–Leu231 form the MPN domain. His180, His182, and Asp193 together coordinate Zn(2+). The short motif at His180–Asp193 is the JAMM motif element.

The protein belongs to the UPF0758 family.

The sequence is that of UPF0758 protein RBAM_025090 from Bacillus velezensis (strain DSM 23117 / BGSC 10A6 / LMG 26770 / FZB42) (Bacillus amyloliquefaciens subsp. plantarum).